The following is a 156-amino-acid chain: UPF0336 protein SACE_6876 (156 aa).

The region spanning 8-128 (IGREYPPTPA…DFLTVRAEIT (121 aa)) is the MaoC-like domain.

It belongs to the UPF0336 family.

The polypeptide is UPF0336 protein SACE_6876 (Saccharopolyspora erythraea (strain ATCC 11635 / DSM 40517 / JCM 4748 / NBRC 13426 / NCIMB 8594 / NRRL 2338)).